Consider the following 202-residue polypeptide: Arenicin-1 (202 aa).

Positions 1-25 are cleaved as a signal peptide; sequence MTSTQSVAVCATLILAIFCVNDIHC. Residues 26–181 constitute a propeptide that is removed on maturation; it reads DPIAEARAAA…SGDNNEPEKR (156 aa). Residues 73–168 form the BRICHOS domain; sequence GDGVEGSVMV…ACQGKSVYWL (96 aa). Disulfide bonds link cysteine 100/cysteine 160 and cysteine 184/cysteine 201.

Has antimicrobial activity against the Gram-negative bacteria E.coli and P.mirabilis, the Gram-positive bacterium L.monocytogenes and the yeast C.albicans. The chain is Arenicin-1 from Arenicola marina (Lugworm).